The sequence spans 1028 residues: Collagen alpha-1(VI) chain (1028 aa).

The N-terminal stretch at 1-19 (MRAARALLPLLLQACWTAA) is a signal peptide. Positions 20–256 (QDEPETPRAV…CCSFECQPAR (237 aa)) are N-terminal globular domain. Residues 37 to 235 (DLFFVLDTSE…EAISQTIDTI (199 aa)) form the VWFA 1 domain. N-linked (GlcNAc...) asparagine glycosylation occurs at asparagine 212. The disordered stretch occupies residues 254–590 (PARGPPGLRG…GPPGHQGPPG (337 aa)). A triple-helical region region spans residues 257 to 592 (GPPGLRGDPG…PGHQGPPGPD (336 aa)). The Cell attachment site signature appears at 262–264 (RGD). Composition is skewed to basic and acidic residues over residues 268-285 (EGER…EAGD) and 301-334 (KGEK…DGVK). Positions 384 to 394 (RPGSSGPSGDE) are enriched in low complexity. The Cell attachment site signature appears at 442 to 444 (RGD). Low complexity predominate over residues 457–471 (EGPVGVPGDPGEAGP). Positions 478–480 (RGD) match the Cell attachment site motif. Over residues 483-493 (PPGSEGARGAP) the composition is skewed to low complexity. Residues asparagine 516 and asparagine 537 are each glycosylated (N-linked (GlcNAc...) asparagine). The segment covering 550-560 (GEAGDPGDDNN) has biased composition (acidic residues). Residues 579–590 (PQGPPGHQGPPG) show a composition bias toward pro residues. The tract at residues 593–1028 (ECEILDIIMK…QTVSRKVALG (436 aa)) is C-terminal globular domain. VWFA domains follow at residues 615–805 (DLLF…LKNV) and 829–1021 (DITI…HQTV). 2 N-linked (GlcNAc...) asparagine glycosylation sites follow: asparagine 804 and asparagine 896.

It belongs to the type VI collagen family. In terms of assembly, trimers composed of three different chains: alpha-1(VI), alpha-2(VI), and alpha-3(VI) or alpha-5(VI) or alpha-6(VI). Prolines at the third position of the tripeptide repeating unit (G-X-Y) are hydroxylated in some or all of the chains.

The protein localises to the secreted. It localises to the extracellular space. It is found in the extracellular matrix. Functionally, collagen VI acts as a cell-binding protein. The protein is Collagen alpha-1(VI) chain (COL6A1) of Homo sapiens (Human).